Reading from the N-terminus, the 600-residue chain is Isocitrate dehydrogenase kinase/phosphatase (600 aa).

ATP-binding positions include 335–341 (APGIRGM) and Lys-356. Residue Asp-390 is part of the active site.

Belongs to the AceK family.

The protein resides in the cytoplasm. The catalysed reaction is L-seryl-[isocitrate dehydrogenase] + ATP = O-phospho-L-seryl-[isocitrate dehydrogenase] + ADP + H(+). Its function is as follows. Bifunctional enzyme which can phosphorylate or dephosphorylate isocitrate dehydrogenase (IDH) on a specific serine residue. This is a regulatory mechanism which enables bacteria to bypass the Krebs cycle via the glyoxylate shunt in response to the source of carbon. When bacteria are grown on glucose, IDH is fully active and unphosphorylated, but when grown on acetate or ethanol, the activity of IDH declines drastically concomitant with its phosphorylation. The sequence is that of Isocitrate dehydrogenase kinase/phosphatase from Bordetella parapertussis (strain 12822 / ATCC BAA-587 / NCTC 13253).